A 227-amino-acid chain; its full sequence is Probable chorismate pyruvate-lyase (227 aa).

Positions 75, 113, and 173 each coordinate substrate. The disordered stretch occupies residues serine 192 to arginine 227. Residues arginine 200–alanine 212 are compositionally biased toward basic and acidic residues.

The protein belongs to the UbiC family.

Its subcellular location is the cytoplasm. It catalyses the reaction chorismate = 4-hydroxybenzoate + pyruvate. It functions in the pathway cofactor biosynthesis; ubiquinone biosynthesis. Removes the pyruvyl group from chorismate, with concomitant aromatization of the ring, to provide 4-hydroxybenzoate (4HB) for the ubiquinone pathway. The sequence is that of Probable chorismate pyruvate-lyase from Paraburkholderia xenovorans (strain LB400).